Reading from the N-terminus, the 145-residue chain is Class I hydrophobin 1 (145 aa).

The N-terminal stretch at 1–18 (MYASVIIYTLVALCGVMS) is a signal peptide. 4 disulfide bridges follow: Cys88-Cys118, Cys95-Cys112, Cys96-Cys106, and Cys119-Cys128. N-linked (GlcNAc...) asparagine glycosylation is present at Asn108.

The protein belongs to the fungal hydrophobin family. In terms of assembly, self-assembles to form functional amyloid fibrils called rodlets. Self-assembly into fibrillar rodlets occurs spontaneously at hydrophobic:hydrophilic interfaces and the rodlets further associate laterally to form amphipathic monolayers.

It is found in the secreted. The protein resides in the cell wall. Its function is as follows. Aerial growth, conidiation, and dispersal of filamentous fungi in the environment rely upon a capability of their secreting small amphipathic proteins called hydrophobins (HPBs) with low sequence identity. Class I can self-assemble into an outermost layer of rodlet bundles on aerial cell surfaces, conferring cellular hydrophobicity that supports fungal growth, development and dispersal; whereas Class II form highly ordered films at water-air interfaces through intermolecular interactions but contribute nothing to the rodlet structure. Hyd1 is a class I hydrophobin that is involved in plant root attachment and colonization, and that might also protect the growing hyphae from locally synthesized plant defense compounds during the first stages of cucumber interaction, allowing this opportunistic, non-pathogenic fungus to colonize the intercellular spaces of the plant root. The protein is Class I hydrophobin 1 of Trichoderma asperellum (Filamentous fungus).